The chain runs to 55 residues: Large ribosomal subunit protein bL33 (55 aa).

Belongs to the bacterial ribosomal protein bL33 family.

In Orientia tsutsugamushi (strain Boryong) (Rickettsia tsutsugamushi), this protein is Large ribosomal subunit protein bL33.